The primary structure comprises 445 residues: Cyclin-B1-2 (445 aa).

It belongs to the cyclin family. Cyclin AB subfamily. As to quaternary structure, interacts with FZR2/CCS52A1, FZR1/CCS52A2 and FZR3/CCS52B. Expressed in roots, stems and flowers.

Functionally, may induce mitotic cell division. This chain is Cyclin-B1-2 (CYCB1-2), found in Arabidopsis thaliana (Mouse-ear cress).